The following is a 423-amino-acid chain: UDP-N-acetylglucosamine 1-carboxyvinyltransferase (423 aa).

22–23 (KN) contacts phosphoenolpyruvate. Arg93 contacts UDP-N-acetyl-alpha-D-glucosamine. Residue Cys117 is the Proton donor of the active site. Cys117 carries the post-translational modification 2-(S-cysteinyl)pyruvic acid O-phosphothioketal. UDP-N-acetyl-alpha-D-glucosamine is bound by residues 122-126 (RPIDL), Asp307, and Val329.

The protein belongs to the EPSP synthase family. MurA subfamily.

It localises to the cytoplasm. It carries out the reaction phosphoenolpyruvate + UDP-N-acetyl-alpha-D-glucosamine = UDP-N-acetyl-3-O-(1-carboxyvinyl)-alpha-D-glucosamine + phosphate. Its pathway is cell wall biogenesis; peptidoglycan biosynthesis. Its function is as follows. Cell wall formation. Adds enolpyruvyl to UDP-N-acetylglucosamine. The sequence is that of UDP-N-acetylglucosamine 1-carboxyvinyltransferase from Chlorobium chlorochromatii (strain CaD3).